We begin with the raw amino-acid sequence, 946 residues long: Aminopeptidase N (946 aa).

A signal peptide spans 1–15 (MRLLICLTLLGLVCG). Asparagine 60 carries N-linked (GlcNAc...) asparagine glycosylation. 308 to 312 (GAMEN) contributes to the substrate binding site. A Zn(2+)-binding site is contributed by histidine 344. Glutamate 345 acts as the Proton acceptor in catalysis. Zn(2+) is bound by residues histidine 348 and glutamate 367. Asparagine 550 and asparagine 605 each carry an N-linked (GlcNAc...) asparagine glycan. Disulfide bonds link cysteine 715–cysteine 722 and cysteine 751–cysteine 787.

This sequence belongs to the peptidase M1 family. Zn(2+) is required as a cofactor.

The protein resides in the cell membrane. The enzyme catalyses Release of an N-terminal amino acid, Xaa-|-Yaa- from a peptide, amide or arylamide. Xaa is preferably Ala, but may be most amino acids including Pro (slow action). When a terminal hydrophobic residue is followed by a prolyl residue, the two may be released as an intact Xaa-Pro dipeptide.. The polypeptide is Aminopeptidase N (APN1) (Plutella xylostella (Diamondback moth)).